A 180-amino-acid polypeptide reads, in one-letter code: Large ribosomal subunit protein uL5 (180 aa).

It belongs to the universal ribosomal protein uL5 family. In terms of assembly, part of the 50S ribosomal subunit; part of the 5S rRNA/L5/L18/L25 subcomplex. Contacts the 5S rRNA and the P site tRNA. Forms a bridge to the 30S subunit in the 70S ribosome.

Its function is as follows. This is one of the proteins that bind and probably mediate the attachment of the 5S RNA into the large ribosomal subunit, where it forms part of the central protuberance. In the 70S ribosome it contacts protein S13 of the 30S subunit (bridge B1b), connecting the 2 subunits; this bridge is implicated in subunit movement. Contacts the P site tRNA; the 5S rRNA and some of its associated proteins might help stabilize positioning of ribosome-bound tRNAs. This chain is Large ribosomal subunit protein uL5, found in Limosilactobacillus fermentum (strain NBRC 3956 / LMG 18251) (Lactobacillus fermentum).